The chain runs to 139 residues: Large-conductance mechanosensitive channel (139 aa).

3 helical membrane-spanning segments follow: residues 16–36, 40–60, and 79–99; these read VIDLAVGVIIGAAFNDIVKAL, IVMPPIGLVLSGIDFSDLAWV, and GAFINTCIRFLIVAWAVFMLV.

The protein belongs to the MscL family. In terms of assembly, homopentamer.

The protein localises to the cell inner membrane. Channel that opens in response to stretch forces in the membrane lipid bilayer. May participate in the regulation of osmotic pressure changes within the cell. The chain is Large-conductance mechanosensitive channel from Phenylobacterium zucineum (strain HLK1).